Here is a 573-residue protein sequence, read N- to C-terminus: 2-succinyl-5-enolpyruvyl-6-hydroxy-3-cyclohexene-1-carboxylate synthase (573 aa).

Belongs to the TPP enzyme family. MenD subfamily. In terms of assembly, homodimer. Requires Mg(2+) as cofactor. Mn(2+) is required as a cofactor. It depends on thiamine diphosphate as a cofactor.

The enzyme catalyses isochorismate + 2-oxoglutarate + H(+) = 5-enolpyruvoyl-6-hydroxy-2-succinyl-cyclohex-3-ene-1-carboxylate + CO2. It participates in quinol/quinone metabolism; 1,4-dihydroxy-2-naphthoate biosynthesis; 1,4-dihydroxy-2-naphthoate from chorismate: step 2/7. The protein operates within quinol/quinone metabolism; menaquinone biosynthesis. Functionally, catalyzes the thiamine diphosphate-dependent decarboxylation of 2-oxoglutarate and the subsequent addition of the resulting succinic semialdehyde-thiamine pyrophosphate anion to isochorismate to yield 2-succinyl-5-enolpyruvyl-6-hydroxy-3-cyclohexene-1-carboxylate (SEPHCHC). In Shewanella oneidensis (strain ATCC 700550 / JCM 31522 / CIP 106686 / LMG 19005 / NCIMB 14063 / MR-1), this protein is 2-succinyl-5-enolpyruvyl-6-hydroxy-3-cyclohexene-1-carboxylate synthase.